Here is a 231-residue protein sequence, read N- to C-terminus: 2,3-bisphosphoglycerate-dependent phosphoglycerate mutase (231 aa).

Residues 10–17 (RHGQSEWN), 23–24 (TG), Arg62, 89–92 (ERHY), Lys100, 116–117 (RR), and 185–186 (GN) each bind substrate. His11 (tele-phosphohistidine intermediate) is an active-site residue. Glu89 functions as the Proton donor/acceptor in the catalytic mechanism.

It belongs to the phosphoglycerate mutase family. BPG-dependent PGAM subfamily. In terms of assembly, homodimer.

It carries out the reaction (2R)-2-phosphoglycerate = (2R)-3-phosphoglycerate. It functions in the pathway carbohydrate degradation; glycolysis; pyruvate from D-glyceraldehyde 3-phosphate: step 3/5. Catalyzes the interconversion of 2-phosphoglycerate and 3-phosphoglycerate. The protein is 2,3-bisphosphoglycerate-dependent phosphoglycerate mutase of Buchnera aphidicola subsp. Acyrthosiphon pisum (strain 5A).